A 252-amino-acid polypeptide reads, in one-letter code: 2-succinyl-6-hydroxy-2,4-cyclohexadiene-1-carboxylate synthase (252 aa).

The protein belongs to the AB hydrolase superfamily. MenH family. In terms of assembly, monomer.

The catalysed reaction is 5-enolpyruvoyl-6-hydroxy-2-succinyl-cyclohex-3-ene-1-carboxylate = (1R,6R)-6-hydroxy-2-succinyl-cyclohexa-2,4-diene-1-carboxylate + pyruvate. Its pathway is quinol/quinone metabolism; 1,4-dihydroxy-2-naphthoate biosynthesis; 1,4-dihydroxy-2-naphthoate from chorismate: step 3/7. The protein operates within quinol/quinone metabolism; menaquinone biosynthesis. Catalyzes a proton abstraction reaction that results in 2,5-elimination of pyruvate from 2-succinyl-5-enolpyruvyl-6-hydroxy-3-cyclohexene-1-carboxylate (SEPHCHC) and the formation of 2-succinyl-6-hydroxy-2,4-cyclohexadiene-1-carboxylate (SHCHC). This chain is 2-succinyl-6-hydroxy-2,4-cyclohexadiene-1-carboxylate synthase, found in Klebsiella pneumoniae (strain 342).